Here is a 437-residue protein sequence, read N- to C-terminus: Membrane protein NfeD1b (437 aa).

The next 5 membrane-spanning stretches (helical) occupy residues 2–22, 231–251, 253–273, 288–308, and 316–336; these read LQIK…LLGV, WLTN…GLTV, LFSP…LLFF, LLFI…GGII, and IIAS…SLLI.

It belongs to the NfeD family.

The protein resides in the cell membrane. In Bacillus subtilis (strain 168), this protein is Membrane protein NfeD1b.